A 211-amino-acid chain; its full sequence is Beta-crystallin B3 (211 aa).

N-acetylmethionine is present on Met-1. Ala-2 carries the N-acetylalanine; in Beta-crystallin B3, N-terminally processed modification. Positions 2–23 are N-terminal arm; it reads AEQHSTPEQAAAGKSHGGLGGS. 2 consecutive Beta/gamma crystallin 'Greek key' domains span residues 24 to 63 and 64 to 108; these read YKVI…QVES and GPWL…RPLH. The tract at residues 109–113 is connecting peptide; that stretch reads IDGPD. Beta/gamma crystallin 'Greek key' domains follow at residues 114 to 155 and 156 to 198; these read HKLH…RAIN and GTWV…RRIR. The interval 200–211 is C-terminal arm; sequence QKWHKRGVFLSS.

The protein belongs to the beta/gamma-crystallin family. In terms of assembly, homo/heterodimer, or complexes of higher-order. The structure of beta-crystallin oligomers seems to be stabilized through interactions between the N-terminal arms.

Functionally, crystallins are the dominant structural components of the vertebrate eye lens. The sequence is that of Beta-crystallin B3 (CRYBB3) from Bos taurus (Bovine).